The primary structure comprises 254 residues: Acetylglutamate kinase (254 aa).

Residues G40–G41, R62, and N154 each bind substrate. ATP contacts are provided by residues D177 to L182 and I205 to T207.

Belongs to the acetylglutamate kinase family. ArgB subfamily. As to quaternary structure, homodimer.

It is found in the cytoplasm. It carries out the reaction N-acetyl-L-glutamate + ATP = N-acetyl-L-glutamyl 5-phosphate + ADP. Its pathway is amino-acid biosynthesis; L-arginine biosynthesis; N(2)-acetyl-L-ornithine from L-glutamate: step 2/4. In terms of biological role, catalyzes the ATP-dependent phosphorylation of N-acetyl-L-glutamate. The protein is Acetylglutamate kinase of Yersinia enterocolitica serotype O:8 / biotype 1B (strain NCTC 13174 / 8081).